Here is a 635-residue protein sequence, read N- to C-terminus: Sodium- and chloride-dependent creatine transporter 1 (635 aa).

Positions Met1–Pro27 are disordered. The Cytoplasmic portion of the chain corresponds to Met1–Asp60. A helical membrane pass occupies residues Phe61–Leu81. Topologically, residues Cys82–Gly87 are extracellular. The chain crosses the membrane as a helical span at residues Gly88–Leu108. Topologically, residues Glu109–Met138 are cytoplasmic. A helical membrane pass occupies residues Val139–Leu159. The Extracellular segment spans residues Val160–Ala230. N-linked (GlcNAc...) asparagine glycans are attached at residues Asn192 and Asn197. A helical transmembrane segment spans residues Leu231–Trp251. Over Lys252–Tyr269 the chain is Cytoplasmic. The chain crosses the membrane as a helical span at residues Val270–Ile290. Over Tyr291–Gln304 the chain is Extracellular. Residues Val305–Thr325 traverse the membrane as a helical segment. Residues Ala326–Ala341 are Cytoplasmic-facing. A helical transmembrane segment spans residues Ile342–Ile362. Topologically, residues Leu363–Thr394 are extracellular. Residues Leu395–Leu415 traverse the membrane as a helical segment. The Cytoplasmic segment spans residues Asp416–Glu444. A helical membrane pass occupies residues Ile445–Gly465. The Extracellular portion of the chain corresponds to Gly466–Ser479. The chain crosses the membrane as a helical span at residues Gly480–Ala500. The Cytoplasmic segment spans residues Asp501 to Lys520. The chain crosses the membrane as a helical span at residues Trp521–Tyr541. Topologically, residues Tyr542–Met560 are extracellular. N-linked (GlcNAc...) asparagine glycosylation occurs at Asn548. The chain crosses the membrane as a helical span at residues Gly561–Leu581. Residues Arg582–Met635 lie on the Cytoplasmic side of the membrane. Phosphothreonine occurs at positions 617 and 620. Ser623 bears the Phosphoserine mark.

This sequence belongs to the sodium:neurotransmitter symporter (SNF) (TC 2.A.22) family. SLC6A8 subfamily. In terms of processing, glycosylated. Brain. Highly expressed in brain capillaries branching in all cortical layers and moderately expressed in neuronal perikarya (at protein level).

It localises to the cell membrane. It is found in the apical cell membrane. The enzyme catalyses creatine(out) + chloride(out) + 2 Na(+)(out) = creatine(in) + chloride(in) + 2 Na(+)(in). Functionally, creatine:sodium symporter which mediates the uptake of creatine. Plays an important role in supplying creatine to the brain via the blood-brain barrier. The protein is Sodium- and chloride-dependent creatine transporter 1 (Slc6a8) of Mus musculus (Mouse).